We begin with the raw amino-acid sequence, 331 residues long: 6-phosphogluconolactonase (331 aa).

The residue at position 287 (Lys287) is an N6-acetyllysine.

It belongs to the cycloisomerase 2 family.

The catalysed reaction is 6-phospho-D-glucono-1,5-lactone + H2O = 6-phospho-D-gluconate + H(+). Its pathway is carbohydrate degradation; pentose phosphate pathway; D-ribulose 5-phosphate from D-glucose 6-phosphate (oxidative stage): step 2/3. Its function is as follows. Catalyzes the hydrolysis of 6-phosphogluconolactone to 6-phosphogluconate. The chain is 6-phosphogluconolactonase from Shigella boydii serotype 18 (strain CDC 3083-94 / BS512).